Consider the following 198-residue polypeptide: Recombination protein RecR (198 aa).

The C4-type zinc-finger motif lies at 57-72 (CSVCGHITENDPCYIC). Positions 80 to 175 (SVICVVEDDK…KVTRLAQGLS (96 aa)) constitute a Toprim domain.

The protein belongs to the RecR family.

Its function is as follows. May play a role in DNA repair. It seems to be involved in an RecBC-independent recombinational process of DNA repair. It may act with RecF and RecO. The sequence is that of Recombination protein RecR from Staphylococcus haemolyticus (strain JCSC1435).